Reading from the N-terminus, the 263-residue chain is Tryptophan 2,3-dioxygenase (263 aa).

Substrate is bound by residues 32–36, tyrosine 94, and arginine 98; that span reads FIIVH. Histidine 221 is a heme binding site. Residue threonine 235 coordinates substrate.

This sequence belongs to the tryptophan 2,3-dioxygenase family. As to quaternary structure, homotetramer. The cofactor is heme.

The enzyme catalyses L-tryptophan + O2 = N-formyl-L-kynurenine. It functions in the pathway amino-acid degradation; L-tryptophan degradation via kynurenine pathway; L-kynurenine from L-tryptophan: step 1/2. Functionally, heme-dependent dioxygenase that catalyzes the oxidative cleavage of the L-tryptophan (L-Trp) pyrrole ring and converts L-tryptophan to N-formyl-L-kynurenine. Catalyzes the oxidative cleavage of the indole moiety. This Erythrobacter litoralis (strain HTCC2594) protein is Tryptophan 2,3-dioxygenase.